The chain runs to 319 residues: tRNA uridine(34) hydroxylase (319 aa).

Positions 123–221 constitute a Rhodanese domain; sequence GDPDVVVIDT…YLETIPPEQS (99 aa). Cysteine 181 serves as the catalytic Cysteine persulfide intermediate. Positions 298 to 319 are disordered; sequence ARQQVHIGASPEPKAMPATAGR.

The protein belongs to the TrhO family.

It carries out the reaction uridine(34) in tRNA + AH2 + O2 = 5-hydroxyuridine(34) in tRNA + A + H2O. Its function is as follows. Catalyzes oxygen-dependent 5-hydroxyuridine (ho5U) modification at position 34 in tRNAs. This chain is tRNA uridine(34) hydroxylase, found in Albidiferax ferrireducens (strain ATCC BAA-621 / DSM 15236 / T118) (Rhodoferax ferrireducens).